The following is a 364-amino-acid chain: tRNA 2-selenouridine synthase (364 aa).

Positions 14–137 (LIADTPIIDV…LRQTTIQATI (124 aa)) constitute a Rhodanese domain. The active-site S-selanylcysteine intermediate is the cysteine 97.

Belongs to the SelU family. Monomer.

The enzyme catalyses 5-methylaminomethyl-2-thiouridine(34) in tRNA + selenophosphate + (2E)-geranyl diphosphate + H2O + H(+) = 5-methylaminomethyl-2-selenouridine(34) in tRNA + (2E)-thiogeraniol + phosphate + diphosphate. It catalyses the reaction 5-methylaminomethyl-2-thiouridine(34) in tRNA + (2E)-geranyl diphosphate = 5-methylaminomethyl-S-(2E)-geranyl-thiouridine(34) in tRNA + diphosphate. The catalysed reaction is 5-methylaminomethyl-S-(2E)-geranyl-thiouridine(34) in tRNA + selenophosphate + H(+) = 5-methylaminomethyl-2-(Se-phospho)selenouridine(34) in tRNA + (2E)-thiogeraniol. It carries out the reaction 5-methylaminomethyl-2-(Se-phospho)selenouridine(34) in tRNA + H2O = 5-methylaminomethyl-2-selenouridine(34) in tRNA + phosphate. Its function is as follows. Involved in the post-transcriptional modification of the uridine at the wobble position (U34) of tRNA(Lys), tRNA(Glu) and tRNA(Gln). Catalyzes the conversion of 2-thiouridine (S2U-RNA) to 2-selenouridine (Se2U-RNA). Acts in a two-step process involving geranylation of 2-thiouridine (S2U) to S-geranyl-2-thiouridine (geS2U) and subsequent selenation of the latter derivative to 2-selenouridine (Se2U) in the tRNA chain. The chain is tRNA 2-selenouridine synthase from Escherichia coli O139:H28 (strain E24377A / ETEC).